A 189-amino-acid chain; its full sequence is Probable nicotinate-nucleotide adenylyltransferase (189 aa).

The protein belongs to the NadD family.

It carries out the reaction nicotinate beta-D-ribonucleotide + ATP + H(+) = deamido-NAD(+) + diphosphate. Its pathway is cofactor biosynthesis; NAD(+) biosynthesis; deamido-NAD(+) from nicotinate D-ribonucleotide: step 1/1. Catalyzes the reversible adenylation of nicotinate mononucleotide (NaMN) to nicotinic acid adenine dinucleotide (NaAD). The protein is Probable nicotinate-nucleotide adenylyltransferase of Bacillus cereus (strain B4264).